The chain runs to 430 residues: MAASTGKLRTLFSAHSSLSARPSSALPALRLTILRSYATTTPPDSSISNPSNPSTTVKRPPTAFKDKLNAGPAFSDFVSGKKDEPLDPAEAYALKTALVGPAGRKKEITRLPSWLKTPIPDSSNYKRIKNDLRGLNLHTVCEEARCPNISDCWGGSSKSAATATIMLMGDTCTRGCRFCSVKTSNKPPPLDPHEPENTAEALSRWGLGYVVLTSVDRDDLADGGARHFAETVLKIKQKAPNILVECLTGDYAGDLEMVALVANSGLDVYAHNVETVEALTPFVRDRRATFQQSLRVLKAAKATKPELITKTSLMLGLGETEAQLWDTLRALRAIDVDVVTFGQYMRPTKRHMAVHEYVRPDVFDMWKERALEMGFLYCASGPLVRSSYKAGEAFIENVLKKKRGKNVGSASGKGTTSENVEKLVAGEAVR.

The N-terminal 37 residues, 1–37, are a transit peptide targeting the mitochondrion; it reads MAASTGKLRTLFSAHSSLSARPSSALPALRLTILRSY. A compositionally biased stretch (low complexity) spans 40–56; the sequence is TTPPDSSISNPSNPSTT. The tract at residues 40 to 64 is disordered; that stretch reads TTPPDSSISNPSNPSTTVKRPPTAF. [4Fe-4S] cluster contacts are provided by Cys141, Cys146, Cys152, Cys172, Cys176, Cys179, and Ser387. In terms of domain architecture, Radical SAM core spans 155–376; the sequence is GSSKSAATAT…KERALEMGFL (222 aa).

Belongs to the radical SAM superfamily. Lipoyl synthase family. The cofactor is [4Fe-4S] cluster.

The protein resides in the mitochondrion. It catalyses the reaction [[Fe-S] cluster scaffold protein carrying a second [4Fe-4S](2+) cluster] + N(6)-octanoyl-L-lysyl-[protein] + 2 oxidized [2Fe-2S]-[ferredoxin] + 2 S-adenosyl-L-methionine + 4 H(+) = [[Fe-S] cluster scaffold protein] + N(6)-[(R)-dihydrolipoyl]-L-lysyl-[protein] + 4 Fe(3+) + 2 hydrogen sulfide + 2 5'-deoxyadenosine + 2 L-methionine + 2 reduced [2Fe-2S]-[ferredoxin]. It functions in the pathway protein modification; protein lipoylation via endogenous pathway; protein N(6)-(lipoyl)lysine from octanoyl-[acyl-carrier-protein]: step 2/2. Functionally, catalyzes the radical-mediated insertion of two sulfur atoms into the C-6 and C-8 positions of the octanoyl moiety bound to the lipoyl domains of lipoate-dependent enzymes, thereby converting the octanoylated domains into lipoylated derivatives. The protein is Lipoyl synthase, mitochondrial of Blastomyces gilchristii (strain SLH14081) (Blastomyces dermatitidis).